The sequence spans 117 residues: Aspartate 1-decarboxylase (117 aa).

The Schiff-base intermediate with substrate; via pyruvic acid role is filled by Ser25. Ser25 is subject to Pyruvic acid (Ser). Thr57 lines the substrate pocket. Catalysis depends on Tyr58, which acts as the Proton donor. 73-75 (GAA) serves as a coordination point for substrate.

Belongs to the PanD family. In terms of assembly, heterooctamer of four alpha and four beta subunits. Pyruvate serves as cofactor. Post-translationally, is synthesized initially as an inactive proenzyme, which is activated by self-cleavage at a specific serine bond to produce a beta-subunit with a hydroxyl group at its C-terminus and an alpha-subunit with a pyruvoyl group at its N-terminus.

It localises to the cytoplasm. It catalyses the reaction L-aspartate + H(+) = beta-alanine + CO2. It participates in cofactor biosynthesis; (R)-pantothenate biosynthesis; beta-alanine from L-aspartate: step 1/1. Its function is as follows. Catalyzes the pyruvoyl-dependent decarboxylation of aspartate to produce beta-alanine. In Thermoanaerobacter pseudethanolicus (strain ATCC 33223 / 39E) (Clostridium thermohydrosulfuricum), this protein is Aspartate 1-decarboxylase.